Consider the following 92-residue polypeptide: Small ribosomal subunit protein bS18 (92 aa).

The protein belongs to the bacterial ribosomal protein bS18 family. In terms of assembly, part of the 30S ribosomal subunit. Forms a tight heterodimer with protein bS6.

Functionally, binds as a heterodimer with protein bS6 to the central domain of the 16S rRNA, where it helps stabilize the platform of the 30S subunit. The polypeptide is Small ribosomal subunit protein bS18 (Cupriavidus necator (strain ATCC 17699 / DSM 428 / KCTC 22496 / NCIMB 10442 / H16 / Stanier 337) (Ralstonia eutropha)).